Consider the following 360-residue polypeptide: Probable L-asparaginase 1 (360 aa).

Positions 1-16 (MWRSIISFLFFSVALC) are cleaved as a signal peptide. Residues Asn27, Asn35, and Asn40 are each glycosylated (N-linked (GlcNAc...) asparagine). The region spanning 39–359 (PNVTIFAMGG…QNITDIFSLE (321 aa)) is the Asparaginase/glutaminase domain. The active-site O-isoaspartyl threonine intermediate is the Thr49. The N-linked (GlcNAc...) asparagine glycan is linked to Asn82. Ser96 provides a ligand contact to substrate. N-linked (GlcNAc...) asparagine glycosylation is present at Asn106. Residue 129–130 (TD) coordinates substrate. Residues Asn144, Asn179, Asn246, Asn302, and Asn351 are each glycosylated (N-linked (GlcNAc...) asparagine).

Belongs to the asparaginase 1 family.

Its subcellular location is the secreted. The protein resides in the cell wall. The catalysed reaction is L-asparagine + H2O = L-aspartate + NH4(+). The protein is Probable L-asparaginase 1 of Schizosaccharomyces pombe (strain 972 / ATCC 24843) (Fission yeast).